Consider the following 185-residue polypeptide: NAD(P)H-dependent FMN reductase PA1204 (185 aa).

FMN-binding positions include S13–N20 and Y81–Y83. S115–A122 contributes to the NAD(+) binding site.

Belongs to the SsuE family. Homodimer. Requires FMN as cofactor.

In terms of biological role, has NAD(P)H-dependent FMN reductase activity. The polypeptide is NAD(P)H-dependent FMN reductase PA1204 (Pseudomonas aeruginosa (strain ATCC 15692 / DSM 22644 / CIP 104116 / JCM 14847 / LMG 12228 / 1C / PRS 101 / PAO1)).